We begin with the raw amino-acid sequence, 501 residues long: Glutamate--tRNA ligase (501 aa).

The 'HIGH' region motif lies at proline 11–asparagine 21. A 'KMSKS' region motif is present at residues lysine 257–arginine 261. Lysine 260 is an ATP binding site.

It belongs to the class-I aminoacyl-tRNA synthetase family. Glutamate--tRNA ligase type 1 subfamily. As to quaternary structure, monomer.

The protein localises to the cytoplasm. The enzyme catalyses tRNA(Glu) + L-glutamate + ATP = L-glutamyl-tRNA(Glu) + AMP + diphosphate. Catalyzes the attachment of glutamate to tRNA(Glu) in a two-step reaction: glutamate is first activated by ATP to form Glu-AMP and then transferred to the acceptor end of tRNA(Glu). In Limosilactobacillus reuteri subsp. reuteri (strain JCM 1112) (Lactobacillus reuteri), this protein is Glutamate--tRNA ligase.